A 429-amino-acid chain; its full sequence is Argininosuccinate lyase (429 aa).

It belongs to the lyase 1 family. Argininosuccinate lyase subfamily.

It localises to the cytoplasm. It catalyses the reaction 2-(N(omega)-L-arginino)succinate = fumarate + L-arginine. It functions in the pathway amino-acid biosynthesis; L-arginine biosynthesis; L-arginine from L-ornithine and carbamoyl phosphate: step 3/3. This chain is Argininosuccinate lyase, found in Pyrobaculum neutrophilum (strain DSM 2338 / JCM 9278 / NBRC 100436 / V24Sta) (Thermoproteus neutrophilus).